Consider the following 98-residue polypeptide: NADH-ubiquinone oxidoreductase chain 4L (98 aa).

Helical transmembrane passes span 1–21, 26–46, and 61–81; these read MSLIHMNVMMAFSMSLVGLLM, LMSALLCLEGMALSLFIFTTL, and IILLVFTACEAAIGLALLVMI.

It belongs to the complex I subunit 4L family. In terms of assembly, core subunit of respiratory chain NADH dehydrogenase (Complex I) which is composed of 45 different subunits.

It localises to the mitochondrion inner membrane. The catalysed reaction is a ubiquinone + NADH + 5 H(+)(in) = a ubiquinol + NAD(+) + 4 H(+)(out). Its function is as follows. Core subunit of the mitochondrial membrane respiratory chain NADH dehydrogenase (Complex I) which catalyzes electron transfer from NADH through the respiratory chain, using ubiquinone as an electron acceptor. Part of the enzyme membrane arm which is embedded in the lipid bilayer and involved in proton translocation. In Physeter macrocephalus (Sperm whale), this protein is NADH-ubiquinone oxidoreductase chain 4L (MT-ND4L).